The chain runs to 488 residues: NADH-ubiquinone oxidoreductase chain 2 (488 aa).

A run of 14 helical transmembrane segments spans residues 4-24, 45-65, 84-104, 111-131, 134-154, 168-188, 215-235, 252-272, 282-302, 308-328, 334-354, 375-395, 400-420, and 456-476; these read LFLA…LLIH, WLGL…APLL, FCQI…FDFF, AFEF…MISA, LIAM…LAAS, YLIL…MIYG, IFMG…AVPF, AFLS…VFIY, IFFF…MAQT, LAYS…CGTI, LLIG…IVLA, ILAI…PLAG, FYLF…VGVV, and LLLA…SPLF.

Belongs to the complex I subunit 2 family.

The protein resides in the mitochondrion inner membrane. The enzyme catalyses a ubiquinone + NADH + 5 H(+)(in) = a ubiquinol + NAD(+) + 4 H(+)(out). Functionally, core subunit of the mitochondrial membrane respiratory chain NADH dehydrogenase (Complex I) that is believed to belong to the minimal assembly required for catalysis. Complex I functions in the transfer of electrons from NADH to the respiratory chain. The immediate electron acceptor for the enzyme is believed to be ubiquinone. The protein is NADH-ubiquinone oxidoreductase chain 2 (ND2) of Oenothera berteroana (Bertero's evening primrose).